The chain runs to 438 residues: GDP-mannose 6-dehydrogenase (438 aa).

6 residues coordinate NAD(+): tyrosine 10, valine 11, aspartate 30, lysine 35, threonine 86, and threonine 124. 10 residues coordinate GDP-alpha-D-mannuronate: glutamate 161, lysine 210, asparagine 214, histidine 217, asparagine 225, tyrosine 256, tyrosine 257, arginine 259, phenylalanine 262, and glycine 265. Residue cysteine 268 is part of the active site. Residue lysine 271 participates in NAD(+) binding. A GDP-alpha-D-mannuronate-binding site is contributed by lysine 324. Residue arginine 331 participates in NAD(+) binding.

It belongs to the UDP-glucose/GDP-mannose dehydrogenase family.

It catalyses the reaction GDP-alpha-D-mannose + 2 NAD(+) + H2O = GDP-alpha-D-mannuronate + 2 NADH + 3 H(+). Its pathway is glycan biosynthesis; alginate biosynthesis. Catalyzes the oxidation of guanosine diphospho-D-mannose (GDP-D-mannose) to GDP-D-mannuronic acid, a precursor for alginate polymerization. The alginate layer causes a mucoid phenotype and provides a protective barrier against host immune defenses and antibiotics. The polypeptide is GDP-mannose 6-dehydrogenase (algD) (Pseudomonas syringae pv. tomato (strain ATCC BAA-871 / DC3000)).